The following is a 328-amino-acid chain: Tetraacyldisaccharide 4'-kinase (328 aa).

55–62 lines the ATP pocket; the sequence is TAGGNGKT.

The protein belongs to the LpxK family.

It catalyses the reaction a lipid A disaccharide + ATP = a lipid IVA + ADP + H(+). It participates in glycolipid biosynthesis; lipid IV(A) biosynthesis; lipid IV(A) from (3R)-3-hydroxytetradecanoyl-[acyl-carrier-protein] and UDP-N-acetyl-alpha-D-glucosamine: step 6/6. In terms of biological role, transfers the gamma-phosphate of ATP to the 4'-position of a tetraacyldisaccharide 1-phosphate intermediate (termed DS-1-P) to form tetraacyldisaccharide 1,4'-bis-phosphate (lipid IVA). In Yersinia pseudotuberculosis serotype I (strain IP32953), this protein is Tetraacyldisaccharide 4'-kinase.